A 645-amino-acid chain; its full sequence is 1-deoxy-D-xylulose-5-phosphate synthase (645 aa).

Residues H87 and 128–130 (GHS) contribute to the thiamine diphosphate site. Position 159 (D159) interacts with Mg(2+). Thiamine diphosphate-binding positions include 160–161 (GA), N188, F295, and E384. N188 is a binding site for Mg(2+).

This sequence belongs to the transketolase family. DXPS subfamily. In terms of assembly, homodimer. Mg(2+) is required as a cofactor. It depends on thiamine diphosphate as a cofactor.

It catalyses the reaction D-glyceraldehyde 3-phosphate + pyruvate + H(+) = 1-deoxy-D-xylulose 5-phosphate + CO2. The protein operates within metabolic intermediate biosynthesis; 1-deoxy-D-xylulose 5-phosphate biosynthesis; 1-deoxy-D-xylulose 5-phosphate from D-glyceraldehyde 3-phosphate and pyruvate: step 1/1. In terms of biological role, catalyzes the acyloin condensation reaction between C atoms 2 and 3 of pyruvate and glyceraldehyde 3-phosphate to yield 1-deoxy-D-xylulose-5-phosphate (DXP). In Alcanivorax borkumensis (strain ATCC 700651 / DSM 11573 / NCIMB 13689 / SK2), this protein is 1-deoxy-D-xylulose-5-phosphate synthase.